We begin with the raw amino-acid sequence, 363 residues long: Ribosomal RNA large subunit methyltransferase M (363 aa).

Residues Ser-190, 223–226, Asp-242, Asp-262, and Asp-279 each bind S-adenosyl-L-methionine; that span reads CPGG. Lys-308 acts as the Proton acceptor in catalysis.

It belongs to the class I-like SAM-binding methyltransferase superfamily. RNA methyltransferase RlmE family. RlmM subfamily. As to quaternary structure, monomer.

It is found in the cytoplasm. It catalyses the reaction cytidine(2498) in 23S rRNA + S-adenosyl-L-methionine = 2'-O-methylcytidine(2498) in 23S rRNA + S-adenosyl-L-homocysteine + H(+). Functionally, catalyzes the 2'-O-methylation at nucleotide C2498 in 23S rRNA. This Aliivibrio salmonicida (strain LFI1238) (Vibrio salmonicida (strain LFI1238)) protein is Ribosomal RNA large subunit methyltransferase M.